The primary structure comprises 160 residues: MTKEVVVESFELDHTIVKAPYVRLISEEVGPVGDIITNFDIRLIQPNENAIDTAGLHTIEHLLAKLIRQRINGLIDCSPFGCRTGFHMIMWGKQDATEIAKVIKSSLEAIAGGVTWEDVPGTTIESCGNYKDHSLHSAQEWAKLILSQGISDNAFERHIV.

Fe cation is bound by residues histidine 57, histidine 61, and cysteine 127.

This sequence belongs to the LuxS family. In terms of assembly, homodimer. Fe cation is required as a cofactor.

It carries out the reaction S-(5-deoxy-D-ribos-5-yl)-L-homocysteine = (S)-4,5-dihydroxypentane-2,3-dione + L-homocysteine. Its function is as follows. Involved in the synthesis of autoinducer 2 (AI-2) which is secreted by bacteria and is used to communicate both the cell density and the metabolic potential of the environment. The regulation of gene expression in response to changes in cell density is called quorum sensing. Catalyzes the transformation of S-ribosylhomocysteine (RHC) to homocysteine (HC) and 4,5-dihydroxy-2,3-pentadione (DPD). The polypeptide is S-ribosylhomocysteine lyase (Streptococcus agalactiae serotype V (strain ATCC BAA-611 / 2603 V/R)).